The primary structure comprises 1097 residues: RE1-silencing transcription factor (1097 aa).

The interaction with SIN3A stretch occupies residues 32 to 122 (DLHDLSKAEL…SLELSVVEPQ (91 aa)). The segment at 43–57 (APQLIMLANVALTGE) is interaction with SIN3B. 2 disordered regions span residues 83 to 103 (NFSD…KGEP) and 127 to 159 (ASGA…TKPF). A compositionally biased stretch (acidic residues) spans 86–96 (DSEEGEGLEES). The interval 145–418 (PGAEDKGKSS…KSKHPTCPNK (274 aa)) is interaction with ZFP90. Residues 159 to 181 (FRCKPCQYEAESEEQFVHHIRVH) form a C2H2-type 1 zinc finger. The tract at residues 201–212 (SGSSTAEEGDFS) is required for binding to the neuron-restrictive silencer element. 7 C2H2-type zinc fingers span residues 216 to 238 (IRCD…LKHH), 248 to 270 (YKCI…LRNH), 276 to 298 (YTCG…VRTH), 304 to 326 (YKCE…MRTH), 332 to 355 (FKCD…RQVH), 361 to 383 (LNCP…VELH), and 389 to 412 (FNCP…KSKH). Residues 452–479 (KIKGDVAGKKNEKSVKAEKRDVSKEKKP) are compositionally biased toward basic and acidic residues. Disordered stretches follow at residues 452–642 (KIKG…MEGA), 774–837 (KEPV…EQVL), 853–938 (ESVS…NGKH), and 961–1049 (GINS…NAKE). Residues 480–490 (SNNVSVIQVTT) show a composition bias toward polar residues. Basic and acidic residues-rich tracts occupy residues 495 to 504 (SVTEVKEMDV) and 559 to 570 (PKGDSKVEENKK). The span at 577 to 593 (KSTKKKTLKNKSSKKSS) shows a compositional bias: basic residues. Residues 803 to 836 (PPLHMEPISKKPPLRKDKKEKSNMQSERARKEQV) are compositionally biased toward basic and acidic residues. S864 is modified (phosphoserine). A compositionally biased stretch (polar residues) spans 913 to 930 (INESTHISSSGQNLNTPE). S971 carries the post-translational modification Phosphoserine. The segment at 1009-1087 (EGIHSHEGSD…HLNRHLVNVY (79 aa)) is interaction with RCOR1. Residues 1060 to 1082 (FVCIFCDRSFRKGKDYSKHLNRH) form a C2H2-type 9 zinc finger.

Isoform 1 and isoform 3 form heterodimers. Isoform 3: Forms homodimers and homooligomers; binds to the neuron-restrictive silencer element (NRSE) as monomer. Interacts with SIN3A, SIN3B and RCOR1. Interacts with CDYL. Interacts with EHMT1 and EHMT2 only in the presence of CDYL. Part of a complex containing at least CDYL, REST, WIZ, SETB1, EHMT1 and EHMT2. Interacts (via zinc-finger DNA-binding domain) with ZFP90 (via N- and C-termini); the interaction inhibits REST repressor activity. Interacts (via C2H2-type zinc finger 5) with PRICKLE1. Interacts with FBXW11 and BTRC. Interacts with USP7. In terms of processing, O-glycosylated. Post-translationally, phosphorylated; phosphorylation is required for ubiquitination. Ubiquitinated; ubiquitination is mediated by BTRC and leads to proteasomal degradation in G2 phase. Ubiquitination increases during neuronal differentiation. Deubiquitinated by USP7; leading to its stabilization and promoting the maintenance of neural progenitor cells. As to expression, expressed in neurons of the prefrontal cortex, in hippocampal pyramidal neurons, dentate gyrus granule neurons and cerebellar Purkinje and granule neurons (at protein level). Expressed in dopaminergic neurons of the substantia nigra (at protein level). Expressed in neural progenitor cells (at protein level). In patients suffering from Alzheimer disease, frontotemporal dementia or dementia with Lewy bodies, decreased nuclear levels have been observed in neurons of the prefrontal cortex and the hippocampus, but not in neurons of the dentate gyrus and cerebellum (at protein level). In patients with Parkinson disease or dementia with Lewy bodies, decreased nuclear levels have been observed in dopaminergic neurons and in cortical neurons and localization to Lewy bodies and pale bodies was detected (at protein level). Expressed at higher levels in weakly invasive breast cancer cell lines and at lower levels in highly invasive breast cancer lines (at protein level). Ubiquitous. Expressed at higher levels in the tissues of the lymphocytic compartment, including spleen, thymus, peripheral blood lymphocytes and ovary.

Its subcellular location is the nucleus. The protein localises to the cytoplasm. Transcriptional repressor which binds neuron-restrictive silencer element (NRSE) and represses neuronal gene transcription in non-neuronal cells. Restricts the expression of neuronal genes by associating with two distinct corepressors, SIN3A and RCOR1, which in turn recruit histone deacetylase to the promoters of REST-regulated genes. Mediates repression by recruiting the BHC complex at RE1/NRSE sites which acts by deacetylating and demethylating specific sites on histones, thereby acting as a chromatin modifier. Transcriptional repression by REST-CDYL via the recruitment of histone methyltransferase EHMT2 may be important in transformation suppression. Represses the expression of SRRM4 in non-neural cells to prevent the activation of neural-specific splicing events and to prevent production of REST isoform 3. Repressor activity may be inhibited by forming heterodimers with isoform 3, thereby preventing binding to NRSE or binding to corepressors and leading to derepression of target genes. Also maintains repression of neuronal genes in neural stem cells, and allows transcription and differentiation into neurons by dissociation from RE1/NRSE sites of target genes. Thereby is involved in maintaining the quiescent state of adult neural stem cells and preventing premature differentiation into mature neurons. Plays a role in the developmental switch in synaptic NMDA receptor composition during postnatal development, by repressing GRIN2B expression and thereby altering NMDA receptor properties from containing primarily GRIN2B to primarily GRIN2A subunits. Acts as a regulator of osteoblast differentiation. Key repressor of gene expression in hypoxia; represses genes in hypoxia by direct binding to an RE1/NRSE site on their promoter regions. May also function in stress resistance in the brain during aging; possibly by regulating expression of genes involved in cell death and in the stress response. Repressor of gene expression in the hippocampus after ischemia by directly binding to RE1/NRSE sites and recruiting SIN3A and RCOR1 to promoters of target genes, thereby promoting changes in chromatin modifications and ischemia-induced cell death. After ischemia, might play a role in repression of miR-132 expression in hippocampal neurons, thereby leading to neuronal cell death. Negatively regulates the expression of SRRM3 in breast cancer cell lines. Functionally, binds to the 3' region of the neuron-restrictive silencer element (NRSE), with lower affinity than full-length REST isoform 1. Exhibits weaker repressor activity compared to isoform 1. May negatively regulate the repressor activity of isoform 1 by binding to isoform 1, thereby preventing its binding to NRSE and leading to derepression of target genes. However, in another study, does not appear to be implicated in repressor activity of a NRSE motif-containing reporter construct nor in inhibitory activity on the isoform 1 transcriptional repressor activity. Post-transcriptional inactivation of REST by SRRM4-dependent alternative splicing into isoform 3 is required in mechanosensory hair cells in the inner ear for derepression of neuronal genes and hearing. In Homo sapiens (Human), this protein is RE1-silencing transcription factor (REST).